The following is a 351-amino-acid chain: Histidinol-phosphate aminotransferase (351 aa).

Position 213 is an N6-(pyridoxal phosphate)lysine (Lys-213).

It belongs to the class-II pyridoxal-phosphate-dependent aminotransferase family. Histidinol-phosphate aminotransferase subfamily. As to quaternary structure, homodimer. The cofactor is pyridoxal 5'-phosphate.

It carries out the reaction L-histidinol phosphate + 2-oxoglutarate = 3-(imidazol-4-yl)-2-oxopropyl phosphate + L-glutamate. It catalyses the reaction L-histidine + 2-oxoglutarate = 3-(imidazol-5-yl)pyruvate + L-glutamate. Its pathway is amino-acid biosynthesis; L-histidine biosynthesis; L-histidine from 5-phospho-alpha-D-ribose 1-diphosphate: step 7/9. This chain is Histidinol-phosphate aminotransferase, found in Caldanaerobacter subterraneus subsp. tengcongensis (strain DSM 15242 / JCM 11007 / NBRC 100824 / MB4) (Thermoanaerobacter tengcongensis).